A 310-amino-acid chain; its full sequence is Putative HTH-type transcriptional regulatory protein LS215_1371 (310 aa).

Positions 125-180 (LKHKREEMGYSIGDVAKFLGVSRKAIYDYEKGDSDVSLEVAEKLIDLFGDDIIGDV) constitute an HTH cro/C1-type domain. The segment at residues 136–155 (IGDVAKFLGVSRKAIYDYEK) is a DNA-binding region (H-T-H motif).

The protein is Putative HTH-type transcriptional regulatory protein LS215_1371 of Saccharolobus islandicus (strain L.S.2.15 / Lassen #1) (Sulfolobus islandicus).